Consider the following 490-residue polypeptide: GTPase Der (490 aa).

2 EngA-type G domains span residues 3–166 (PVVA…AEAM) and 200–373 (IKLA…DSAT). Residues 9-16 (GRPNVGKS), 56-60 (DTGGI), 118-121 (NKVD), 206-213 (GKPNVGKS), 253-257 (DTAGV), and 318-321 (NKWD) contribute to the GTP site. One can recognise a KH-like domain in the interval 374–458 (RRVSTSMLTR…PIQLRFQEGG (85 aa)). A disordered region spans residues 470–490 (TVSQERRRKRMVGHIRDKNKD).

This sequence belongs to the TRAFAC class TrmE-Era-EngA-EngB-Septin-like GTPase superfamily. EngA (Der) GTPase family. Associates with the 50S ribosomal subunit.

GTPase that plays an essential role in the late steps of ribosome biogenesis. This chain is GTPase Der, found in Shewanella pealeana (strain ATCC 700345 / ANG-SQ1).